A 115-amino-acid chain; its full sequence is Small ribosomal subunit protein uS14m (115 aa).

The protein belongs to the universal ribosomal protein uS14 family. As to quaternary structure, component of the mitochondrial small ribosomal subunit (mt-SSU). Mature yeast 74S mitochondrial ribosomes consist of a small (37S) and a large (54S) subunit. The 37S small subunit contains a 15S ribosomal RNA (15S mt-rRNA) and 34 different proteins. The 54S large subunit contains a 21S rRNA (21S mt-rRNA) and 46 different proteins.

It localises to the mitochondrion. In terms of biological role, component of the mitochondrial ribosome (mitoribosome), a dedicated translation machinery responsible for the synthesis of mitochondrial genome-encoded proteins, including at least some of the essential transmembrane subunits of the mitochondrial respiratory chain. The mitoribosomes are attached to the mitochondrial inner membrane and translation products are cotranslationally integrated into the membrane. This chain is Small ribosomal subunit protein uS14m (MRP2), found in Saccharomyces cerevisiae (strain ATCC 204508 / S288c) (Baker's yeast).